The primary structure comprises 530 residues: Cation transporter HKT2;2 (530 aa).

The Cytoplasmic segment spans residues 1–40 (MTSIYQEFIHTKCQSFRSIGRYVLHSIVLIYRFVSLHVHP). 2 helical membrane-spanning segments follow: residues 41–61 (FWIQ…LLMF) and 102–122 (IVVL…FLGL). The Cytoplasmic segment spans residues 123 to 186 (MLRLKHKHNP…DLKRSKRLRW (64 aa)). A run of 2 helical transmembrane segments spans residues 187–207 (FLGF…FLLV) and 260–280 (GLLL…PLFL). Residues 281-317 (RILIWFLGKVTKLKDLKLMIKNSDELQYDYLLPKLPT) lie on the Cytoplasmic side of the membrane. 2 helical membrane-spanning segments follow: residues 318–338 (AFLA…FGSV) and 372–392 (IDCS…MYLP). Residues 393–420 (PSTTFALSNGDEKTANKKAKRKLGLVVR) lie on the Cytoplasmic side of the membrane. The next 2 membrane-spanning stretches (helical) occupy residues 421–441 (NLAF…LITE) and 494–514 (SLSG…MLYG). The Cytoplasmic segment spans residues 515–530 (RLKAFTKGTGEYWRLW).

It belongs to the TrkH potassium transport family. HKT (TC 2.A.38.3) subfamily.

Its subcellular location is the membrane. Its function is as follows. Seems to be involved in regulation of potassium-sodium homeostasis. Seems to act as a potassium-sodium cotransporter, which mediates increased potassium uptake under external sodium accumulation and contributes to salt-tolerance in cultivar indica Pokkali. This Oryza sativa subsp. indica (Rice) protein is Cation transporter HKT2;2.